We begin with the raw amino-acid sequence, 366 residues long: Histidinol-phosphate aminotransferase (366 aa).

K228 bears the N6-(pyridoxal phosphate)lysine mark.

Belongs to the class-II pyridoxal-phosphate-dependent aminotransferase family. Histidinol-phosphate aminotransferase subfamily. As to quaternary structure, homodimer. The cofactor is pyridoxal 5'-phosphate.

It catalyses the reaction L-histidinol phosphate + 2-oxoglutarate = 3-(imidazol-4-yl)-2-oxopropyl phosphate + L-glutamate. The protein operates within amino-acid biosynthesis; L-histidine biosynthesis; L-histidine from 5-phospho-alpha-D-ribose 1-diphosphate: step 7/9. The sequence is that of Histidinol-phosphate aminotransferase from Stutzerimonas stutzeri (Pseudomonas stutzeri).